Reading from the N-terminus, the 280-residue chain is Shikimate dehydrogenase (NADP(+)) (280 aa).

Shikimate is bound by residues 20-22 and Thr-67; that span reads SLS. Lys-71 acts as the Proton acceptor in catalysis. An NADP(+)-binding site is contributed by Glu-83. Asn-92 and Asp-107 together coordinate shikimate. NADP(+)-binding positions include 131–135, 155–160, and Leu-224; these read GAGGA and NRTLNK. Tyr-226 is a shikimate binding site. Residue Gly-247 participates in NADP(+) binding.

It belongs to the shikimate dehydrogenase family. In terms of assembly, homodimer.

It catalyses the reaction shikimate + NADP(+) = 3-dehydroshikimate + NADPH + H(+). Its pathway is metabolic intermediate biosynthesis; chorismate biosynthesis; chorismate from D-erythrose 4-phosphate and phosphoenolpyruvate: step 4/7. In terms of biological role, involved in the biosynthesis of the chorismate, which leads to the biosynthesis of aromatic amino acids. Catalyzes the reversible NADPH linked reduction of 3-dehydroshikimate (DHSA) to yield shikimate (SA). The sequence is that of Shikimate dehydrogenase (NADP(+)) from Caldanaerobacter subterraneus subsp. tengcongensis (strain DSM 15242 / JCM 11007 / NBRC 100824 / MB4) (Thermoanaerobacter tengcongensis).